Here is a 457-residue protein sequence, read N- to C-terminus: LSVCFLILFHGCLASRQEWQQQDECQIDRLDALEPDNRVEYEAGTVEAWDPNHEQFRCAGVALVRHTIQPNGLLLPQYSNAPQLIYVVQGEGMTGISYPGCPETYQAPQQGRQQGQSGRFQDRHQKIRRFRRGDIIAIPAGVAHWCYNEGNSPVVTVTLLDVSNSQNQLDRTPRKFHLAGNPKDVFQQQQQHQSRGRNLFSGFDTELLAEAFQVDERLIKQLKSEDNRGGIVKVKDDELRVIRPSRSQSERGSESEEESEDEKRRWGQRDNGIEETICTMRLKENINDPARADIYTPEVGRLTTLNSLNLPILKWLQLSVEKGVLYKNALVLPHWNLNSHSIIYGCKGKGQVQVVDNFGNRVFDGEVREGQMLVVPQNFAVVKRAREERFEWISFKTNDRAMTSPLAGRTSVLGGMPEEVLANAFQISREDARKIKFNNQQTTLTSGESSHHMRDDA.

A signal peptide spans 1–14 (LSVCFLILFHGCLA). Residues 15–29 (SRQEWQQQDECQIDR) form an igE-binding region. Intrachain disulfides connect cysteine 25–cysteine 58 and cysteine 101–cysteine 278. 2 conformational epitope; mouse monoclonal antibody (mAb) 2B5-binding regions span residues 29-37 (RLDALEPDN) and 31-48 (DALEPDNRVEYEAGTVEA). One can recognise a Cupin type-1 1 domain in the interval 30–220 (LDALEPDNRV…AFQVDERLIK (191 aa)). 2 binds goat polyclonal antibodies (pAbs) regions span residues 32-45 (ALEPDNRVEYEAGT) and 55-86 (QFRCAGVALVRHTIQPNGLLLPQYSNAPQLIY). A mouse monoclonal antibody (mAb) 2B5-binding region spans residues 34–57 (EPDNRVEYEAGTVEAWDPNHEQFR). Positions 41-55 (YEAGTVEAWDPNHEQ) are mouse monoclonal antibody (mAb) 4H9-binding. The interval 105–119 (YQAPQQGRQQGQSGR) is igE-binding. Positions 215-239 (DERLIKQLKSEDNRGGIVKVKDDEL) are binds goat polyclonal antibodies (pAbs). The CD4(+) T cell-reactive epitope stretch occupies residues 233–252 (KVKDDELRVIRPSRSQSERG). The interval 243–270 (RPSRSQSERGSESEEESEDEKRRWGQRD) is disordered. The segment covering 261-270 (DEKRRWGQRD) has biased composition (basic and acidic residues). The tract at residues 265–289 (RWGQRDNGIEETICTMRLKENINDP) is linear epitope; mouse monoclonal antibody (mAb) 1F5-binding. The NGXEET; peptidase recognition motif signature appears at 271-276 (NGIEET). The Cupin type-1 2 domain occupies 284-433 (ENINDPARAD…AFQISREDAR (150 aa)). CD4(+) T cell-reactive epitope regions lie at residues 289–308 (PARADIYTPEVGRLTTLNSL), 297–316 (PEVGRLTTLNSLNLPILKWL), 321–340 (EKGVLYKNALVLPHWNLNSH), 329–348 (ALVLPHWNLNSHSIIYGCKG), and 377–396 (QNFAVVKRAREERFEWISFK). The segment at 395–416 (FKTNDRAMTSPLAGRTSVLGGM) is binds goat polyclonal antibodies (pAbs), but buried in the 3D-structure model.

Belongs to the 11S seed storage protein (globulins) family. In terms of assembly, homotrimer. Hexamer. Each subunit is composed of an acidic and a basic chain derived from a single precursor and linked by a disulfide bond. In terms of processing, proteolytically processed from a single precursor to produce an acidic and a basic chain that are linked by a disulfide bond. Not glycosylated. Expressed in seed (at protein level). Expressed in the juice of the cashew apple (at protein level).

In terms of biological role, seed storage protein. The chain is 11S globulin seed storage protein Ana o 2.0101 from Anacardium occidentale (Cashew).